The primary structure comprises 100 residues: Probable antitoxin MazE4 (100 aa).

Residues 77–100 are disordered; that stretch reads PYESEAERSAARARRNARQQRSAQ.

In terms of assembly, forms a complex with cognate toxin MazF4.

Functionally, antitoxin component of a type II toxin-antitoxin (TA) system. Labile antitoxin that binds to cognate MazF4 toxin and counteracts its endoribonuclease activity. The chain is Probable antitoxin MazE4 (mazE4) from Mycobacterium tuberculosis (strain CDC 1551 / Oshkosh).